The chain runs to 406 residues: Tyrosine--tRNA ligase (406 aa).

L-tyrosine is bound at residue Tyr-35. The short motif at 40-49 is the 'HIGH' region element; sequence PTADSLHVGH. L-tyrosine-binding residues include Tyr-168 and Gln-172. The short motif at 228–232 is the 'KMSKS' region element; sequence KMGKT. Lys-231 contributes to the ATP binding site. In terms of domain architecture, S4 RNA-binding spans 340 to 404; that stretch reads STVLDIIAKT…RGKKNYNKIE (65 aa).

Belongs to the class-I aminoacyl-tRNA synthetase family. TyrS type 1 subfamily. In terms of assembly, homodimer.

The protein localises to the cytoplasm. It catalyses the reaction tRNA(Tyr) + L-tyrosine + ATP = L-tyrosyl-tRNA(Tyr) + AMP + diphosphate + H(+). Catalyzes the attachment of tyrosine to tRNA(Tyr) in a two-step reaction: tyrosine is first activated by ATP to form Tyr-AMP and then transferred to the acceptor end of tRNA(Tyr). The sequence is that of Tyrosine--tRNA ligase from Clostridium botulinum (strain Alaska E43 / Type E3).